Here is a 363-residue protein sequence, read N- to C-terminus: Cytoplasmic tRNA 2-thiolation protein 1 (363 aa).

Residues 340–363 (ASLNGTPRTPPTPAEPVEGIERAA) form a disordered region.

It belongs to the TtcA family. CTU1/NCS6/ATPBD3 subfamily.

It localises to the cytoplasm. It participates in tRNA modification; 5-methoxycarbonylmethyl-2-thiouridine-tRNA biosynthesis. Functionally, plays a central role in 2-thiolation of mcm(5)S(2)U at tRNA wobble positions of tRNA(Lys), tRNA(Glu) and tRNA(Gln). Directly binds tRNAs and probably acts by catalyzing adenylation of tRNAs, an intermediate required for 2-thiolation. It is unclear whether it acts as a sulfurtransferase that transfers sulfur from thiocarboxylated URM1 onto the uridine of tRNAs at wobble position. Prior mcm(5) tRNA modification by the elongator complex is required for 2-thiolation. May also be involved in protein urmylation. The sequence is that of Cytoplasmic tRNA 2-thiolation protein 1 from Cryptococcus neoformans var. neoformans serotype D (strain B-3501A) (Filobasidiella neoformans).